Here is a 93-residue protein sequence, read N- to C-terminus: MARSLKKGPFVDDHVMKKVIAAKNANDNKPIKTWSRRSTIVPEMIGLTFNVHNGKSFIPVYVTENHIGYKLGEFAPTRTFKGHKGSVQKKIGK.

It belongs to the universal ribosomal protein uS19 family.

Protein S19 forms a complex with S13 that binds strongly to the 16S ribosomal RNA. The protein is Small ribosomal subunit protein uS19 of Campylobacter concisus (strain 13826).